We begin with the raw amino-acid sequence, 507 residues long: 2,3-bisphosphoglycerate-independent phosphoglycerate mutase (507 aa).

Mn(2+)-binding residues include Asp-13 and Ser-63. Ser-63 (phosphoserine intermediate) is an active-site residue. Substrate is bound by residues His-124, Arg-153 to Asp-154, Arg-183, Arg-189, Arg-254 to Arg-257, and Lys-330. Mn(2+)-binding residues include Asp-396, His-400, Asp-437, His-438, and His-456.

The protein belongs to the BPG-independent phosphoglycerate mutase family. Monomer. The cofactor is Mn(2+).

The catalysed reaction is (2R)-2-phosphoglycerate = (2R)-3-phosphoglycerate. It functions in the pathway carbohydrate degradation; glycolysis; pyruvate from D-glyceraldehyde 3-phosphate: step 3/5. Functionally, catalyzes the interconversion of 2-phosphoglycerate and 3-phosphoglycerate. This Paracoccus denitrificans (strain Pd 1222) protein is 2,3-bisphosphoglycerate-independent phosphoglycerate mutase.